The sequence spans 72 residues: MANRPLDILNNALDTPVIVRLKGAREFRGELKGYDIHMNLVLDNAEELREGEVVSKFGSVVIRGDNVVYVSP.

A Sm domain is found at 4–72; it reads RPLDILNNAL…RGDNVVYVSP (69 aa).

It belongs to the snRNP Sm proteins family.

The protein is Putative snRNP Sm-like protein of Methanosarcina barkeri (strain Fusaro / DSM 804).